Here is a 304-residue protein sequence, read N- to C-terminus: Probable WRKY transcription factor 13 (304 aa).

The segment at 141–190 (QKNNHGSEIDVDDNDDEVGDGGGINDDDNGRHHHHDTPSRHDKHNTASLG) is disordered. Acidic residues predominate over residues 149-159 (IDVDDNDDEVG). The segment at residues 217–282 (SEVDVLDDGY…YEGRHLHSPS (66 aa)) is a DNA-binding region (WRKY).

This sequence belongs to the WRKY group II-c family.

The protein resides in the nucleus. Functionally, transcription factor. Interacts specifically with the W box (5'-(T)TGAC[CT]-3'), a frequently occurring elicitor-responsive cis-acting element. This is Probable WRKY transcription factor 13 (WRKY13) from Arabidopsis thaliana (Mouse-ear cress).